Here is a 142-residue protein sequence, read N- to C-terminus: Large-conductance mechanosensitive channel (142 aa).

Helical transmembrane passes span 14 to 34 (VVDLAVAVIIGAAFGKIVSSL) and 86 to 106 (FGQFITVAVNFLLIAFVVFLV).

Belongs to the MscL family. In terms of assembly, homopentamer.

Its subcellular location is the cell inner membrane. Channel that opens in response to stretch forces in the membrane lipid bilayer. May participate in the regulation of osmotic pressure changes within the cell. This is Large-conductance mechanosensitive channel from Rhizorhabdus wittichii (strain DSM 6014 / CCUG 31198 / JCM 15750 / NBRC 105917 / EY 4224 / RW1) (Sphingomonas wittichii).